Reading from the N-terminus, the 191-residue chain is ECF RNA polymerase sigma-E factor (191 aa).

A binds RNAP core region spans residues 1 to 153 (MSEQLTDQVL…MAITLRELDG (153 aa)). The tract at residues 25 to 92 (LVVRYQHKVA…KNYLVAQGRR (68 aa)) is sigma-70 factor domain-2. The Polymerase core binding motif lies at 48-61 (DVVQEAFIKAYRAL). A sigma-70 factor domain-4 region spans residues 129–180 (QIVFRTIESLPEDLRMAITLRELDGLSYEEIAAIMDCPVGTVRSRIFRAREA). Residues 156-175 (YEEIAAIMDCPVGTVRSRIF) constitute a DNA-binding region (H-T-H motif).

The protein belongs to the sigma-70 factor family. ECF subfamily. As to quaternary structure, interacts transiently with the RNAP catalytic core formed by RpoA, RpoB, RpoC and RpoZ (2 alpha, 1 beta, 1 beta' and 1 omega subunit) to form the RNAP holoenzyme that can initiate transcription. Interacts 1:1 with anti-sigma-E factor RseA which prevents binding to RNAP catalytic core.

It is found in the cytoplasm. With respect to regulation, ECF sigma-E is held in an inactive form by its cognate anti-sigma factor (RseA) until released by regulated intramembrane proteolysis (RIP). RIP occurs when an extracytoplasmic signal (periplasmic stress and excess LPS) triggers a concerted proteolytic cascade to transmit information and elicit cellular responses. The anti-sigma factor RseA is an inner membrane protein, binding sigma-E in the cytoplasm and RseB in the periplasm. RseA is first cut extracytoplasmically (site-1 protease, S1P, by DegS), then within the membrane itself (site-2 protease, S2P, by RseP), while cytoplasmic proteases (predominantly ClpX-ClpP) finish degrading the regulatory protein, liberating sigma-E. Degradation of RseA requires 2 signals to activate DegS; an outer membrane protein (OMP) signal activates DegS, while an LPS signal causes release of RseB from RseA, freeing RseA to be cleaved. Its function is as follows. Sigma factors are initiation factors that promote the attachment of RNA polymerase (RNAP) to specific initiation sites and are then released. Extracytoplasmic function (ECF) sigma-E controls the envelope stress response, responding to periplasmic protein stress, increased levels of periplasmic lipopolysaccharide (LPS) as well as heat shock and oxidative stress; it controls protein processing in the extracytoplasmic compartment. The sequence is that of ECF RNA polymerase sigma-E factor (rpoE) from Escherichia coli O157:H7.